We begin with the raw amino-acid sequence, 491 residues long: Protein LDB17 (491 aa).

S7 bears the Phosphoserine mark. A disordered region spans residues 413–491 (ETPSTPSDGG…PPSRKCGTPK (79 aa)). Low complexity predominate over residues 414–435 (TPSTPSDGGSSVSSNNTSRNSS). 2 positions are modified to phosphoserine: S463 and S466. Residues 474–484 (APPPPPPPPPS) are compositionally biased toward pro residues.

Belongs to the LDB17 family.

The protein localises to the cytoplasm. It is found in the bud. It localises to the bud neck. In terms of biological role, may be involved in protein-linked oligosaccharide phosphorylation since the deletion reduces the negative charge of the cell surface. The polypeptide is Protein LDB17 (LDB17) (Saccharomyces cerevisiae (strain ATCC 204508 / S288c) (Baker's yeast)).